A 119-amino-acid polypeptide reads, in one-letter code: Large ribosomal subunit protein uL14 (119 aa).

Belongs to the universal ribosomal protein uL14 family. Part of the 50S ribosomal subunit. Forms a cluster with proteins L3 and L19. In the 70S ribosome, L14 and L19 interact and together make contacts with the 16S rRNA in bridges B5 and B8.

In terms of biological role, binds to 23S rRNA. Forms part of two intersubunit bridges in the 70S ribosome. The sequence is that of Large ribosomal subunit protein uL14 from Anaplasma phagocytophilum (strain HZ).